The chain runs to 76 residues: Probable insulin-like peptide alpha-type 1 (76 aa).

Residues 1-24 (MKTYSFFVLFIVFIFFISSSKSHS) form the signal peptide. Intrachain disulfides connect C32–C60, C44–C73, and C48–C74.

Belongs to the insulin family.

Its subcellular location is the secreted. This chain is Probable insulin-like peptide alpha-type 1 (ins-21), found in Caenorhabditis elegans.